A 347-amino-acid chain; its full sequence is Microtubule-associated protein Jupiter (347 aa).

Polar residues predominate over residues 1–14 (MISNFDCTDNQASS). The tract at residues 1–33 (MISNFDCTDNQASSKVLRPPGGGSSDIFGSEMP) is disordered. Residue S24 is modified to Phosphoserine. Phosphothreonine occurs at positions 35 and 96. Phosphoserine is present on residues S105, S134, and S145. 2 disordered regions span residues 127–193 (HYNG…PTPP) and 303–347 (GNPV…SGLW). Positions 132 to 145 (SGSVSSASSSVSSS) are enriched in low complexity. Residues 146–164 (TENLKMNSGSRSVFRNMST) are compositionally biased toward polar residues. Positions 181–193 (PPSPVPIEVPTPP) are enriched in pro residues.

The protein belongs to the MAP Jupiter family.

It is found in the nucleus. The protein resides in the cytoplasm. Its subcellular location is the cytoskeleton. It localises to the spindle. Binds to all microtubule populations. The polypeptide is Microtubule-associated protein Jupiter (Drosophila yakuba (Fruit fly)).